Reading from the N-terminus, the 227-residue chain is Nudix hydrolase 27, chloroplastic (227 aa).

Residues 1-44 constitute a chloroplast transit peptide; that stretch reads MAVKASGFIGKSAISVHLDFSSFPVKFSCLKQFSVSSPKPLVVL. The Nudix hydrolase domain occupies 61 to 208; the sequence is GYRKNVGICL…KRPVYEHVIK (148 aa). The Nudix box motif lies at 94-115; the sequence is GGADEGEDLRNAAFRELREETG. The Mn(2+) site is built by glutamate 109 and glutamate 113.

It belongs to the Nudix hydrolase family. Mg(2+) serves as cofactor. The cofactor is Mn(2+). As to expression, expressed in roots, leaves, stems and inflorescences.

Its subcellular location is the plastid. The protein resides in the chloroplast. Its function is as follows. Mediates the hydrolysis of some nucleoside diphosphate derivatives. Can use diadenosine 5',5'''-P(1)P(5) pentaphosphate (Ap(5)A) as substrates. This chain is Nudix hydrolase 27, chloroplastic (NUDT27), found in Arabidopsis thaliana (Mouse-ear cress).